The sequence spans 161 residues: Endoribonuclease YbeY (161 aa).

Residues His-121, His-125, and His-131 each coordinate Zn(2+).

Belongs to the endoribonuclease YbeY family. Zn(2+) serves as cofactor.

Its subcellular location is the cytoplasm. Single strand-specific metallo-endoribonuclease involved in late-stage 70S ribosome quality control and in maturation of the 3' terminus of the 16S rRNA. This chain is Endoribonuclease YbeY, found in Xylella fastidiosa (strain M23).